The following is a 250-amino-acid chain: 3-deoxy-manno-octulosonate cytidylyltransferase (250 aa).

The protein belongs to the KdsB family.

Its subcellular location is the cytoplasm. It catalyses the reaction 3-deoxy-alpha-D-manno-oct-2-ulosonate + CTP = CMP-3-deoxy-beta-D-manno-octulosonate + diphosphate. Its pathway is nucleotide-sugar biosynthesis; CMP-3-deoxy-D-manno-octulosonate biosynthesis; CMP-3-deoxy-D-manno-octulosonate from 3-deoxy-D-manno-octulosonate and CTP: step 1/1. The protein operates within bacterial outer membrane biogenesis; lipopolysaccharide biosynthesis. Activates KDO (a required 8-carbon sugar) for incorporation into bacterial lipopolysaccharide in Gram-negative bacteria. This is 3-deoxy-manno-octulosonate cytidylyltransferase from Thioalkalivibrio sulfidiphilus (strain HL-EbGR7).